A 218-amino-acid chain; its full sequence is Uracil-DNA glycosylase (218 aa).

This sequence belongs to the uracil-DNA glycosylase (UDG) superfamily. UNG family. In terms of assembly, homodimer. Interacts with protein OPG148. Component of the Uracil-DNA glycosylase(UDG)-OPG148-polymerase complex; OPG148 and UDG form a heterodimeric processivity factor that associates with OPG71 to form the processive polymerase holoenzyme.

The catalysed reaction is Hydrolyzes single-stranded DNA or mismatched double-stranded DNA and polynucleotides, releasing free uracil.. Plays an essential role in viral replication as a component of the DNA polymerase processivity factor. Excises uracil residues from the DNA which can arise as a result of misincorporation of dUMP residues by DNA polymerase or due to deamination of cytosine. This chain is Uracil-DNA glycosylase (OPG116), found in Monkeypox virus.